Here is a 417-residue protein sequence, read N- to C-terminus: Carbohydrate sulfotransferase 8 (417 aa).

The Cytoplasmic segment spans residues 1–10 (MTPRLGTMRL). A helical; Signal-anchor for type II membrane protein transmembrane segment spans residues 11 to 31 (ACMFSSILLFGAAGLLLFISL). At 32-417 (QDPIELSPQQ…NYSKPFSDLY (386 aa)) the chain is on the lumenal side. The tract at residues 47–101 (FSIRPQQPQHDSHLRISTEKGTRDSPSGSPRGLQLQAPDQPRPHPKAAGSPLRLR) is disordered. A compositionally biased stretch (basic and acidic residues) spans 56-69 (HDSHLRISTEKGTR). 2 N-linked (GlcNAc...) asparagine glycosylation sites follow: asparagine 121 and asparagine 122. Residues 191 to 197 (PKAGCSN) and 251 to 259 (REPFERLVS) contribute to the 3'-phosphoadenylyl sulfate site. N-linked (GlcNAc...) asparagine glycosylation is found at asparagine 287, asparagine 360, and asparagine 408.

The protein belongs to the sulfotransferase 2 family. In terms of tissue distribution, strongly expressed in brain. Weakly expressed in lung and kidney. Weakly expressed in pituitary.

It is found in the golgi apparatus membrane. Its function is as follows. Catalyzes the transfer of sulfate to position 4 of non-reducing N-acetylgalactosamine (GalNAc) residues in both N-glycans and O-glycans. Required for biosynthesis of glycoprotein hormones lutropin and thyrotropin, by mediating sulfation of their carbohydrate structures. Only active against terminal GalNAcbeta1,GalNAcbeta. Not active toward chondroitin. This is Carbohydrate sulfotransferase 8 (Chst8) from Mus musculus (Mouse).